The sequence spans 425 residues: CinA-like protein (425 aa).

Belongs to the CinA family.

The chain is CinA-like protein from Shewanella sp. (strain ANA-3).